A 257-amino-acid chain; its full sequence is Synaptosomal-associated protein 29 (257 aa).

The disordered stretch occupies residues 1–42 (MSGYPKSYNPFDDDVEDEDTRPAPWKDARDLPDGPDPPIDRQ). Residues 20–32 (TRPAPWKDARDLP) are compositionally biased toward basic and acidic residues. Residues serine 77, serine 78, serine 114, serine 163, serine 181, serine 203, and serine 209 each carry the phosphoserine modification. The t-SNARE coiled-coil homology domain maps to 195–257 (RAYHQKIDSN…KSTEKKVRQL (63 aa)).

The protein belongs to the SNAP-25 family. In terms of assembly, forms a SNARE complex, composed of VAMP8, SNAP29 and STX17, involved in fusion of autophagosome with lysosome. Interacts with multiple syntaxins including STX6. Interacts with EIPR1. Interacts with STX17; this interaction is increased in the absence of TMEM39A. As to expression, widely expressed.

The protein localises to the cytoplasm. It is found in the golgi apparatus membrane. Its subcellular location is the cytoplasmic vesicle. It localises to the autophagosome membrane. The protein resides in the cell projection. The protein localises to the cilium membrane. In terms of biological role, SNAREs, soluble N-ethylmaleimide-sensitive factor-attachment protein receptors, are essential proteins for fusion of cellular membranes. SNAREs localized on opposing membranes assemble to form a trans-SNARE complex, an extended, parallel four alpha-helical bundle that drives membrane fusion. SNAP29 is a SNARE involved in autophagy through the direct control of autophagosome membrane fusion with the lysososome membrane. Also plays a role in ciliogenesis by regulating membrane fusions. The protein is Synaptosomal-associated protein 29 of Rattus norvegicus (Rat).